The chain runs to 190 residues: Recombination protein RecR (190 aa).

The C4-type zinc finger occupies 58–73; that stretch reads CTQCGGLSEDELCYIC. The Toprim domain occupies 81 to 167; that stretch reads SSLCLVESAR…HFTKIAQGVP (87 aa).

This sequence belongs to the RecR family.

May play a role in DNA repair. It seems to be involved in an RecBC-independent recombinational process of DNA repair. It may act with RecF and RecO. This Nitratiruptor sp. (strain SB155-2) protein is Recombination protein RecR.